The chain runs to 256 residues: Geranylgeranylglyceryl phosphate synthase (256 aa).

Residues Asp-28 and Ser-53 each contribute to the Mg(2+) site. Residues 172–178 (YLEAGSG), 203–204 (GG), and 225–226 (GT) each bind sn-glycerol 1-phosphate.

This sequence belongs to the GGGP/HepGP synthase family. Group II subfamily. Mg(2+) serves as cofactor.

The protein localises to the cytoplasm. It catalyses the reaction sn-glycerol 1-phosphate + (2E,6E,10E)-geranylgeranyl diphosphate = sn-3-O-(geranylgeranyl)glycerol 1-phosphate + diphosphate. It functions in the pathway membrane lipid metabolism; glycerophospholipid metabolism. Prenyltransferase that catalyzes the transfer of the geranylgeranyl moiety of geranylgeranyl diphosphate (GGPP) to the C3 hydroxyl of sn-glycerol-1-phosphate (G1P). This reaction is the first ether-bond-formation step in the biosynthesis of archaeal membrane lipids. The protein is Geranylgeranylglyceryl phosphate synthase of Methanococcus maripaludis (strain C7 / ATCC BAA-1331).